The primary structure comprises 226 residues: Ribonuclease 3 (226 aa).

The RNase III domain occupies 6 to 128 (INRLQRKLGY…LIGGVFLDSN (123 aa)). Residue E41 participates in Mg(2+) binding. Residue D45 is part of the active site. 2 residues coordinate Mg(2+): D114 and E117. E117 is an active-site residue. A DRBM domain is found at 155 to 225 (DPKTRLQEYL…AEQALKKLEL (71 aa)).

It belongs to the ribonuclease III family. In terms of assembly, homodimer. It depends on Mg(2+) as a cofactor.

It is found in the cytoplasm. It carries out the reaction Endonucleolytic cleavage to 5'-phosphomonoester.. Digests double-stranded RNA. Involved in the processing of primary rRNA transcript to yield the immediate precursors to the large and small rRNAs (23S and 16S). Processes some mRNAs, and tRNAs when they are encoded in the rRNA operon. Processes pre-crRNA and tracrRNA of type II CRISPR loci if present in the organism. The sequence is that of Ribonuclease 3 from Salmonella enteritidis PT4 (strain P125109).